The following is a 201-amino-acid chain: Imidazole glycerol phosphate synthase subunit HisH (201 aa).

Residues 1–201 enclose the Glutamine amidotransferase type-1 domain; it reads MIAIIDYGAG…LLKRYEEMIR (201 aa). Residue Cys-79 is the Nucleophile of the active site. Active-site residues include His-181 and Glu-183.

As to quaternary structure, heterodimer of HisH and HisF.

The protein resides in the cytoplasm. The enzyme catalyses 5-[(5-phospho-1-deoxy-D-ribulos-1-ylimino)methylamino]-1-(5-phospho-beta-D-ribosyl)imidazole-4-carboxamide + L-glutamine = D-erythro-1-(imidazol-4-yl)glycerol 3-phosphate + 5-amino-1-(5-phospho-beta-D-ribosyl)imidazole-4-carboxamide + L-glutamate + H(+). It carries out the reaction L-glutamine + H2O = L-glutamate + NH4(+). The protein operates within amino-acid biosynthesis; L-histidine biosynthesis; L-histidine from 5-phospho-alpha-D-ribose 1-diphosphate: step 5/9. IGPS catalyzes the conversion of PRFAR and glutamine to IGP, AICAR and glutamate. The HisH subunit catalyzes the hydrolysis of glutamine to glutamate and ammonia as part of the synthesis of IGP and AICAR. The resulting ammonia molecule is channeled to the active site of HisF. The chain is Imidazole glycerol phosphate synthase subunit HisH from Oceanobacillus iheyensis (strain DSM 14371 / CIP 107618 / JCM 11309 / KCTC 3954 / HTE831).